Reading from the N-terminus, the 161-residue chain is Cell division protein SepF 2 (161 aa).

The segment at 19–47 (EDSEKAPELSSSRETKTKNQNQSKSLLRS) is disordered. Basic and acidic residues predominate over residues 21–35 (SEKAPELSSSRETKT).

The protein belongs to the SepF family. As to quaternary structure, homodimer. Interacts with FtsZ.

The protein resides in the cytoplasm. Cell division protein that is part of the divisome complex and is recruited early to the Z-ring. Probably stimulates Z-ring formation, perhaps through the cross-linking of FtsZ protofilaments. Its function overlaps with FtsA. The protein is Cell division protein SepF 2 of Desulforamulus reducens (strain ATCC BAA-1160 / DSM 100696 / MI-1) (Desulfotomaculum reducens).